Consider the following 110-residue polypeptide: ATP-dependent Clp protease adapter protein ClpS (110 aa).

It belongs to the ClpS family. Binds to the N-terminal domain of the chaperone ClpA.

Functionally, involved in the modulation of the specificity of the ClpAP-mediated ATP-dependent protein degradation. This is ATP-dependent Clp protease adapter protein ClpS from Bartonella quintana (strain Toulouse) (Rochalimaea quintana).